Reading from the N-terminus, the 294-residue chain is uncharacterized protein (294 aa).

This sequence belongs to the glycosyltransferase 2 family.

This is an uncharacterized protein from Haemophilus influenzae (strain ATCC 51907 / DSM 11121 / KW20 / Rd).